Here is a 353-residue protein sequence, read N- to C-terminus: B1 bradykinin receptor (353 aa).

Over Met1–Leu40 the chain is Extracellular. N-linked (GlcNAc...) asparagine glycans are attached at residues Asn14 and Asn22. The helical transmembrane segment at Pro41 to Leu64 threads the bilayer. The Cytoplasmic portion of the chain corresponds to Pro65–Glu73. The helical transmembrane segment at Ile74–Trp98 threads the bilayer. The Extracellular segment spans residues Asn99–Arg111. Cys110 and Cys189 are disulfide-bonded. The chain crosses the membrane as a helical span at residues Val112–Gln133. The Cytoplasmic portion of the chain corresponds to Asp134–Arg155. The helical transmembrane segment at Val156–Ile178 threads the bilayer. Residues Gln179 to His199 are Extracellular-facing. A glycan (N-linked (GlcNAc...) asparagine) is linked at Asn185. A helical transmembrane segment spans residues Phe200–Leu226. Residues Ala227 to Lys247 lie on the Cytoplasmic side of the membrane. Residues Thr248–Leu272 traverse the membrane as a helical segment. Residues Glu273–Asp291 are Extracellular-facing. A helical transmembrane segment spans residues Leu292–Phe314. The Cytoplasmic portion of the chain corresponds to Val315–Asn353. The S-palmitoyl cysteine moiety is linked to residue Cys330.

Belongs to the G-protein coupled receptor 1 family. Bradykinin receptor subfamily. BDKRB1 sub-subfamily.

It localises to the cell membrane. This is a receptor for bradykinin. Could be a factor in chronic pain and inflammation. The chain is B1 bradykinin receptor (BDKRB1) from Homo sapiens (Human).